The sequence spans 179 residues: Large ribosomal subunit protein uL6 (179 aa).

This sequence belongs to the universal ribosomal protein uL6 family. In terms of assembly, part of the 50S ribosomal subunit.

In terms of biological role, this protein binds to the 23S rRNA, and is important in its secondary structure. It is located near the subunit interface in the base of the L7/L12 stalk, and near the tRNA binding site of the peptidyltransferase center. The sequence is that of Large ribosomal subunit protein uL6 from Synechococcus sp. (strain WH7803).